Consider the following 575-residue polypeptide: 2-isopropylmalate synthase (575 aa).

Residues proline 31–alanine 305 enclose the Pyruvate carboxyltransferase domain. Mg(2+)-binding residues include aspartate 40, histidine 244, histidine 246, and asparagine 280. The segment at proline 437–glycine 575 is regulatory domain.

Belongs to the alpha-IPM synthase/homocitrate synthase family. LeuA type 2 subfamily. In terms of assembly, homodimer. Requires Mg(2+) as cofactor.

Its subcellular location is the cytoplasm. It carries out the reaction 3-methyl-2-oxobutanoate + acetyl-CoA + H2O = (2S)-2-isopropylmalate + CoA + H(+). It functions in the pathway amino-acid biosynthesis; L-leucine biosynthesis; L-leucine from 3-methyl-2-oxobutanoate: step 1/4. Catalyzes the condensation of the acetyl group of acetyl-CoA with 3-methyl-2-oxobutanoate (2-ketoisovalerate) to form 3-carboxy-3-hydroxy-4-methylpentanoate (2-isopropylmalate). This is 2-isopropylmalate synthase from Herbaspirillum seropedicae (strain SmR1).